The following is a 37-amino-acid chain: Cytochrome b6-f complex subunit 5 (37 aa).

A helical transmembrane segment spans residues 5-25 (LLCGIVLGLIPITLAGLFMAA).

It belongs to the PetG family. The 4 large subunits of the cytochrome b6-f complex are cytochrome b6, subunit IV (17 kDa polypeptide, PetD), cytochrome f and the Rieske protein, while the 4 small subunits are PetG, PetL, PetM and PetN. The complex functions as a dimer.

The protein resides in the cellular thylakoid membrane. Component of the cytochrome b6-f complex, which mediates electron transfer between photosystem II (PSII) and photosystem I (PSI), cyclic electron flow around PSI, and state transitions. PetG is required for either the stability or assembly of the cytochrome b6-f complex. This is Cytochrome b6-f complex subunit 5 from Synechococcus elongatus (strain ATCC 33912 / PCC 7942 / FACHB-805) (Anacystis nidulans R2).